We begin with the raw amino-acid sequence, 350 residues long: Heat-inducible transcription repressor HrcA (350 aa).

This sequence belongs to the HrcA family.

Functionally, negative regulator of class I heat shock genes (grpE-dnaK-dnaJ and groELS operons). Prevents heat-shock induction of these operons. In Xanthomonas campestris pv. campestris (strain ATCC 33913 / DSM 3586 / NCPPB 528 / LMG 568 / P 25), this protein is Heat-inducible transcription repressor HrcA.